Here is a 270-residue protein sequence, read N- to C-terminus: Urease accessory protein UreD (270 aa).

Belongs to the UreD family. In terms of assembly, ureD, UreF and UreG form a complex that acts as a GTP-hydrolysis-dependent molecular chaperone, activating the urease apoprotein by helping to assemble the nickel containing metallocenter of UreC. The UreE protein probably delivers the nickel.

The protein resides in the cytoplasm. Required for maturation of urease via the functional incorporation of the urease nickel metallocenter. This chain is Urease accessory protein UreD, found in Actinobacillus pleuropneumoniae serotype 7 (strain AP76).